Consider the following 130-residue polypeptide: Small ribosomal subunit protein uS9 (130 aa).

It belongs to the universal ribosomal protein uS9 family.

In Marinobacter nauticus (strain ATCC 700491 / DSM 11845 / VT8) (Marinobacter aquaeolei), this protein is Small ribosomal subunit protein uS9.